A 570-amino-acid polypeptide reads, in one-letter code: Dual specificity testis-specific protein kinase 2 (570 aa).

The Protein kinase domain maps to 58–313 (DFTREKIGSG…EIGKTLKEIM (256 aa)). ATP is bound by residues 64-72 (IGSGFFSEV) and Lys-87. Asp-176 functions as the Proton acceptor in the catalytic mechanism. Ser-219 carries the post-translational modification Phosphoserine; by autocatalysis. Residues 316 to 327 (LPEEELERDRKL) show a composition bias toward basic and acidic residues. The disordered stretch occupies residues 316–357 (LPEEELERDRKLQPTAKGPLEKVPGGKRLSSLDDKIPHKSPR). 3 positions are modified to phosphoserine: Ser-369, Ser-456, and Ser-460. The segment at 511-530 (AMDCSNPQEENGFGPRLKGT) is disordered.

The protein belongs to the protein kinase superfamily. TKL Ser/Thr protein kinase family. Mg(2+) serves as cofactor. It depends on Mn(2+) as a cofactor.

It is found in the nucleus. It catalyses the reaction L-seryl-[protein] + ATP = O-phospho-L-seryl-[protein] + ADP + H(+). It carries out the reaction L-threonyl-[protein] + ATP = O-phospho-L-threonyl-[protein] + ADP + H(+). The catalysed reaction is L-tyrosyl-[protein] + ATP = O-phospho-L-tyrosyl-[protein] + ADP + H(+). Its activity is regulated as follows. Activated by autophosphorylation on Ser-219. Dual specificity protein kinase activity catalyzing autophosphorylation and phosphorylation of exogenous substrates on both serine/threonine and tyrosine residues. Phosphorylates cofilin at 'Ser-3'. May play an important role in spermatogenesis. This chain is Dual specificity testis-specific protein kinase 2 (Tesk2), found in Mus musculus (Mouse).